The sequence spans 115 residues: UPF0212 protein MJ0068 (115 aa).

It belongs to the UPF0212 family.

This is UPF0212 protein MJ0068 from Methanocaldococcus jannaschii (strain ATCC 43067 / DSM 2661 / JAL-1 / JCM 10045 / NBRC 100440) (Methanococcus jannaschii).